We begin with the raw amino-acid sequence, 249 residues long: Ribonuclease 3 (249 aa).

An RNase III domain is found at 20–149; sequence FKEFQERISV…FIGALYLDQG (130 aa). Glu-62 contacts Mg(2+). Residue Asp-66 is part of the active site. Mg(2+) contacts are provided by Asp-135 and Glu-138. Residue Glu-138 is part of the active site. Residues 175 to 244 enclose the DRBM domain; it reads DFKSQLQEFV…AQEALAKMQK (70 aa). The segment at 223–249 is disordered; that stretch reads NGRSKKEAEQHAAQEALAKMQKHHTKQ.

The protein belongs to the ribonuclease III family. Homodimer. Requires Mg(2+) as cofactor.

It localises to the cytoplasm. It catalyses the reaction Endonucleolytic cleavage to 5'-phosphomonoester.. Digests double-stranded RNA. Involved in the processing of primary rRNA transcript to yield the immediate precursors to the large and small rRNAs (23S and 16S). Processes some mRNAs, and tRNAs when they are encoded in the rRNA operon. Processes pre-crRNA and tracrRNA of type II CRISPR loci if present in the organism. The chain is Ribonuclease 3 from Bacillus velezensis (strain DSM 23117 / BGSC 10A6 / LMG 26770 / FZB42) (Bacillus amyloliquefaciens subsp. plantarum).